A 178-amino-acid polypeptide reads, in one-letter code: Ribosome maturation factor RimP (178 aa).

This sequence belongs to the RimP family.

It localises to the cytoplasm. Its function is as follows. Required for maturation of 30S ribosomal subunits. The sequence is that of Ribosome maturation factor RimP from Corynebacterium glutamicum (strain ATCC 13032 / DSM 20300 / JCM 1318 / BCRC 11384 / CCUG 27702 / LMG 3730 / NBRC 12168 / NCIMB 10025 / NRRL B-2784 / 534).